The following is a 1055-amino-acid chain: Leukotoxin (1055 aa).

Residues 11–49 (QQAAQFANSVADRAKENIDAAKEQLQKALDKLGKTGKKL) are a coiled coil. Cholesterol recognition/amino acid consensus (CRAC) region regions lie at residues 334–340 (LEEYSKR) and 502–506 (VDYLK). Hemolysin-type calcium-binding repeat units follow at residues 721–738 (IGST…NDVF), 739–756 (HGHD…DDRL), 757–774 (YGDN…NDKL), 775–792 (YGGA…NNYL), 793–810 (DGGE…SDIL), 811–828 (RGGS…DDLL), and 829–846 (DGGE…NDIY). A disordered region spans residues 795 to 815 (GEGDDHLEGGNGSDILRGGSG). Residues 990 to 1009 (KGKSSSLMSSSRSSSMLTQK) form a disordered region. Positions 993–1006 (SSSLMSSSRSSSML) are enriched in low complexity.

Belongs to the RTX prokaryotic toxin (TC 1.C.11) family. Interacts specifically with the superoxide dismutase [Cu-Zn]. This interaction may protect LtxA from reactive oxygen species and reactive nitrogen species produced by host inflammatory cells during disease. Interacts with the human leukocyte adhesion glycoprotein LFA-1 (ITGAL-ITGB2). In terms of processing, acylated at Lys-562 and Lys-687 by LtxC. This modification is required for full activity. Isolated methyl esters contain palmitoyl and palmitolyl fatty acyl groups with smaller quantities of myristic and stearic fatty acids.

The protein resides in the cell outer membrane. Its subcellular location is the secreted. Functionally, virulence factor that plays an important role in immune evasion. Lyses human lymphocytes and monocytes. Binds to the LFA-1 integrin on the surface of the host cell and to cholesterol-containing membranes, which probably results in large LtxA-LFA-1 clusters in lipid rafts. Also shows beta-hemolytic activity on certain types of growth media. This is Leukotoxin from Aggregatibacter actinomycetemcomitans (Actinobacillus actinomycetemcomitans).